We begin with the raw amino-acid sequence, 541 residues long: DNA ligase 1 (541 aa).

Glu-234 provides a ligand contact to ATP. The N6-AMP-lysine intermediate role is filled by Lys-236. ATP is bound by residues Arg-241, Arg-256, Glu-286, Phe-325, Arg-398, and Lys-404.

This sequence belongs to the ATP-dependent DNA ligase family. Mg(2+) serves as cofactor.

It catalyses the reaction ATP + (deoxyribonucleotide)n-3'-hydroxyl + 5'-phospho-(deoxyribonucleotide)m = (deoxyribonucleotide)n+m + AMP + diphosphate.. Its function is as follows. DNA ligase that seals nicks in double-stranded DNA during DNA replication, DNA recombination and DNA repair. This is DNA ligase 1 from Korarchaeum cryptofilum (strain OPF8).